Consider the following 331-residue polypeptide: MKQTVYIASPESQQIHVWNLNHEGALTLTQVVDVPGQVQPMVVSPDKRYLYVGVRPEFRVLAYRIAPDDGALTFAAESALPGSPTHISTDHQGQFVFVGSYNAGNVSVTRLEDGLPVGVVDVVEGLDGCHSANISPDNRTLWVPALKQDRICLFTVSDDGHLVAQDPAEVTTVEGAGPRHMVFHPNEQYAYCVNELNSSVDVWELKDPHGNIECVQTLDMMPENFSDTRWAADIHITPDGRHLYACDRTASLITVFSVSEDGSVLSKEGFQPTETQPRGFNIDHRGKYLIAAGQKSHHISVYEIVGEQGLLHEKGRYAVGQGPMWVVVNAH.

K287 is subject to N6-acetyllysine.

The protein belongs to the cycloisomerase 2 family.

It carries out the reaction 6-phospho-D-glucono-1,5-lactone + H2O = 6-phospho-D-gluconate + H(+). It functions in the pathway carbohydrate degradation; pentose phosphate pathway; D-ribulose 5-phosphate from D-glucose 6-phosphate (oxidative stage): step 2/3. Catalyzes the hydrolysis of 6-phosphogluconolactone to 6-phosphogluconate. The protein is 6-phosphogluconolactonase of Escherichia coli O157:H7.